A 284-amino-acid chain; its full sequence is Protease HtpX (284 aa).

2 helical membrane passes run 4 to 24 (ILLF…ILSL) and 33 to 53 (MGLL…SLLM). His139 contacts Zn(2+). The active site involves Glu140. Zn(2+) is bound at residue His143. The next 2 helical transmembrane spans lie at 147–167 (GDMV…IFAA) and 187–207 (IYFL…SMIA). Zn(2+) is bound at residue Glu215.

Belongs to the peptidase M48B family. Zn(2+) is required as a cofactor.

Its subcellular location is the cell inner membrane. The sequence is that of Protease HtpX from Mannheimia succiniciproducens (strain KCTC 0769BP / MBEL55E).